Consider the following 172-residue polypeptide: Small ribosomal subunit protein uS5 (172 aa).

The S5 DRBM domain maps to 16–79 (LKEKLVHINR…EDGKKNVIKV (64 aa)).

The protein belongs to the universal ribosomal protein uS5 family. As to quaternary structure, part of the 30S ribosomal subunit. Contacts proteins S4 and S8.

Functionally, with S4 and S12 plays an important role in translational accuracy. Located at the back of the 30S subunit body where it stabilizes the conformation of the head with respect to the body. This chain is Small ribosomal subunit protein uS5, found in Pelodictyon phaeoclathratiforme (strain DSM 5477 / BU-1).